Reading from the N-terminus, the 490-residue chain is GTPase Der (490 aa).

EngA-type G domains are found at residues P3–V166 and I203–T376. GTP contacts are provided by residues G9–S16, D56–I60, N118–D121, G209–S216, D256–V260, and N321–D324. A KH-like domain is found at R377–E461.

This sequence belongs to the TRAFAC class TrmE-Era-EngA-EngB-Septin-like GTPase superfamily. EngA (Der) GTPase family. As to quaternary structure, associates with the 50S ribosomal subunit.

Its function is as follows. GTPase that plays an essential role in the late steps of ribosome biogenesis. This is GTPase Der from Citrobacter koseri (strain ATCC BAA-895 / CDC 4225-83 / SGSC4696).